Reading from the N-terminus, the 68-residue chain is KCNQ1 downstream neighbor protein (68 aa).

Positions 28–68 (GVASGCSPSKASQEARGKEKCPTLNGQPQWSALFTLPPQRE) are disordered.

Shows reduced expression in Wilms' tumor samples.

This is KCNQ1 downstream neighbor protein (KCNQ1DN) from Homo sapiens (Human).